A 364-amino-acid polypeptide reads, in one-letter code: Caveolae-associated protein 4 (364 aa).

The interval 1 to 24 (MEHNGSASNADKIHQNRLSSVTED) is disordered. Residues 44 to 77 (VDSVQASQKRIEERHREMENAIKSVQIDLLKLSQ) adopt a coiled-coil conformation. Serine 172 and serine 173 each carry phosphoserine. Positions 202-226 (FSKENMQKTRQNLDKKVNRIRTRIV) form a coiled coil. Residues 231 to 256 (RERLRQSGERLRQSGERLRQSGERFK) show a composition bias toward basic and acidic residues. Disordered stretches follow at residues 231–283 (RERL…RTVA) and 311–339 (SDEL…TPEP). Tyrosine 326 is modified (phosphotyrosine). A Phosphothreonine modification is found at threonine 336. Serine 355 carries the post-translational modification Phosphoserine.

Belongs to the CAVIN family. As to quaternary structure, component of the CAVIN complex composed of CAVIN1, CAVIN2, CAVIN3 and CAVIN4. Interacts with CAVIN1, ADRA1A and ADRA1B. Interacts with CAVIN2; this augments the transactivation of NPPA. Interacts with CAV3. Interacts with MAPK1 and MAPK3.

The protein resides in the cytoplasm. It is found in the myofibril. It localises to the sarcomere. Its subcellular location is the cytosol. The protein localises to the cell membrane. The protein resides in the sarcolemma. It is found in the membrane. It localises to the caveola. Its function is as follows. Modulates the morphology of formed caveolae in cardiomyocytes, but is not required for caveolar formation. Facilitates the recruitment of MAPK1/3 to caveolae within cardiomyocytes and regulates alpha-1 adrenergic receptor-induced hypertrophic responses in cardiomyocytes through MAPK1/3 activation. Contributes to proper membrane localization and stabilization of caveolin-3 (CAV3) in cardiomyocytes. Induces RHOA activation and activates NPPA transcription and myofibrillar organization through the Rho/ROCK signaling pathway. The polypeptide is Caveolae-associated protein 4 (Homo sapiens (Human)).